The following is a 526-amino-acid chain: Probable feruloyl esterase B-2 (526 aa).

Residues 1–19 form the signal peptide; that stretch reads MPSLRRLLPFLAAGSAALA. Disulfide bonds link Cys28-Cys75 and Cys63-Cys114. N-linked (GlcNAc...) asparagine glycosylation is found at Asn53, Asn85, Asn98, and Asn138. Cystine bridges form between Cys187–Cys441, Cys256–Cys273, and Cys282–Cys291. Residue Ser188 is the Acyl-ester intermediate of the active site. Residue Asn246 is glycosylated (N-linked (GlcNAc...) asparagine). Residues Asp257, Asp260, Ala262, Asp264, and Ile266 each coordinate Ca(2+). N-linked (GlcNAc...) asparagine glycans are attached at residues Asn287 and Asn311. Residues Asp400 and His440 each act as charge relay system in the active site. Residues Asn490 and Asn516 are each glycosylated (N-linked (GlcNAc...) asparagine). An intrachain disulfide couples Cys503 to Cys525.

This sequence belongs to the tannase family.

It is found in the secreted. It carries out the reaction feruloyl-polysaccharide + H2O = ferulate + polysaccharide.. Functionally, involved in degradation of plant cell walls. Hydrolyzes the feruloyl-arabinose ester bond in arabinoxylans as well as the feruloyl-galactose and feruloyl-arabinose ester bonds in pectin. This chain is Probable feruloyl esterase B-2 (faeB-2), found in Aspergillus oryzae (strain ATCC 42149 / RIB 40) (Yellow koji mold).